The primary structure comprises 180 residues: CASP-like protein 5A1 (180 aa).

The Cytoplasmic portion of the chain corresponds to 1–36; it reads MEVSHPAVHPVAVPPVLTEPPARVRMKDYQGMPGTL. A helical transmembrane segment spans residues 37-57; it reads GGLALRLGQLGFAVLSFSIMV. The Extracellular portion of the chain corresponds to 58-67; that stretch reads STPDFSQVTA. The chain crosses the membrane as a helical span at residues 68-88; that stretch reads FCYLVAATVLQTLWSSITAVV. Residues 89–102 are Cytoplasmic-facing; the sequence is DIYALSVRRSLHHS. The helical transmembrane segment at 103–123 threads the bilayer; sequence LLVGLFAVGDGVTSTLTFAAA. Residues 124 to 150 are Extracellular-facing; the sequence is CATAGITVLIDNDLDECGQNHCGRFEA. Residues 151-171 form a helical membrane-spanning segment; that stretch reads AAAMAFLSWIMAAPSFLLAFW. The Cytoplasmic portion of the chain corresponds to 172–180; it reads SFGNKIVCF.

This sequence belongs to the Casparian strip membrane proteins (CASP) family. In terms of assembly, homodimer and heterodimers.

The protein localises to the cell membrane. The chain is CASP-like protein 5A1 from Pteridium aquilinum subsp. aquilinum (Bracken fern).